A 176-amino-acid chain; its full sequence is Superoxide oxidase CybB (176 aa).

Residues 1–7 lie on the Cytoplasmic side of the membrane; the sequence is MENKYSR. Residues 8 to 29 form a helical membrane-spanning segment; sequence LQISIHWLVFLLVIAAYCAMEF. Residue His13 participates in heme b binding. The Periplasmic portion of the chain corresponds to 30–39; it reads RGFFPRSDRP. Residues 40–64 form a helical membrane-spanning segment; sequence LINMIHVSCGISILVLMVVRLLLRL. Heme b is bound at residue His45. The Cytoplasmic segment spans residues 65-77; it reads KYPTPPIIPKPKP. The helical transmembrane segment at 78-103 threads the bilayer; that stretch reads MMTGLAHLGHLVIYLLFIALPVIGLV. The Periplasmic segment spans residues 104–135; sequence MMYNRGNPWFAFGLTMPYASEANFERVDSLKS. Residues 136-158 traverse the membrane as a helical segment; it reads WHETLANLGYFVIGLHAAAALAH. Heme b is bound by residues His137 and His151. Residues 159–176 are Cytoplasmic-facing; that stretch reads HYFWKDNTLLRMMPRKRS.

This sequence belongs to the cytochrome b561 family. As to quaternary structure, monomer. Heme b serves as cofactor.

It is found in the cell inner membrane. The catalysed reaction is a ubiquinol + 2 O2 = 2 superoxide + a ubiquinone + 2 H(+). The enzyme catalyses a menaquinol + 2 O2 = 2 superoxide + a menaquinone + 2 H(+). Its activity is regulated as follows. Quinone binding to the enzyme accelerates the reaction with superoxide. B-type di-heme cytochrome. Catalyzes the oxidation of superoxide to molecular oxygen and transfers the extracted electrons to ubiquinone through the two hemes. Can also use menaquinone. The enzyme may be responsible for the detoxification of the superoxide anion produced in the membrane or at its surface. However, it can also efficiently catalyze the formation of superoxide from ubiquinol under physiological conditions. The chain is Superoxide oxidase CybB from Escherichia coli (strain K12).